We begin with the raw amino-acid sequence, 510 residues long: Probable inorganic carbon transporter subunit DabB (510 aa).

The next 14 helical transmembrane spans lie at 9–29 (TLLT…LLFL), 37–57 (FVHI…LALV), 68–88 (WHLD…GLII), 105–122 (YFAL…AWLS), 125–145 (LRFM…LIGL), 158–178 (ISGY…IWLF), 204–224 (TGIN…WPFQ), 226–246 (WLIE…AGLV), 266–286 (QIIL…ISLV), 303–323 (GFML…HLIL), 355–375 (LWMI…WFIT), 382–402 (LVSA…LVVF), 410–430 (IAGL…HNSL), and 446–466 (APAV…CTFV).

This sequence belongs to the inorganic carbon transporter (TC 9.A.2) DabB family. As to quaternary structure, forms a complex with DabA.

It is found in the cell membrane. Functionally, part of an energy-coupled inorganic carbon pump. Expression of both dabA and dabB (DA2) restores growth in ambient air to E.coli deleted of its carbonic anhydrase genes (called CAfree, deletion of 'can' and 'cynT'). This chain is Probable inorganic carbon transporter subunit DabB, found in Bacillus anthracis.